Reading from the N-terminus, the 348-residue chain is Outer membrane protein assembly factor BamC (348 aa).

Residues 1–24 form the signal peptide; sequence MATLLQTSKVMKVAGLSLVVFLAA. Residue C25 is the site of N-palmitoyl cysteine attachment. C25 carries the S-diacylglycerol cysteine lipid modification. Positions 211–230 are disordered; it reads SQQQEEAGQNNAKDSGALTV.

This sequence belongs to the BamC family. As to quaternary structure, part of the Bam complex, which is composed of the outer membrane protein BamA, and four lipoproteins BamB, BamC, BamD and BamE.

It is found in the cell outer membrane. Functionally, part of the outer membrane protein assembly complex, which is involved in assembly and insertion of beta-barrel proteins into the outer membrane. The polypeptide is Outer membrane protein assembly factor BamC (Xenorhabdus nematophila (strain ATCC 19061 / DSM 3370 / CCUG 14189 / LMG 1036 / NCIMB 9965 / AN6)).